A 555-amino-acid polypeptide reads, in one-letter code: MRRSHARSRVKNSSSSKSDMDPIKFQIRSGNRAPSSSSTYTLTKPNSKHAKSNLLLTVGSISVVLGVLFLCYSILFSGGNLRGSLRYSVVIDGGSTGTRIHVFGYRIESGKPVFEFRGANYASLKLHPGLSAFADDPDGASVSLTELVEFAKGRVPKGMWIETEVRLMATAGMRLLELPVQEKILGVARRVLKSSGFLFRDEWASVISGSDEGVYAWVVANFALGSLGGDPLKTTGIVELGGASAQVTFVSSEPMPPEFSRTISFGNVTYNLYSHSFLHFGQNAAHDKLWGSLLSRDHNSAVEPTREKIFTDPCAPKGYNLDANTQKHLSGLLAEESRLSDSFQAGGNYSQCRSAALTILQDGNEKCSYQHCSIGSTFTPKLRGRFLATENFFYTSKFFGLGEKAWLSNMISAGERFCGEDWSKLRVKDPSLHEEDLLRYCFSSAYIVSLLHDTLGIPLDDERIGYANQAGDIPLDWALGAFIQQTATETSQHAASGNLHWFHALFSNHPKTLHYLIGIPILMTVLVYLVTKWRKPQLKTIYDLEKGRYIVTRIR.

Residues 1–10 are compositionally biased toward basic residues; the sequence is MRRSHARSRV. A disordered region spans residues 1–45; it reads MRRSHARSRVKNSSSSKSDMDPIKFQIRSGNRAPSSSSTYTLTKP. Over 1–55 the chain is Cytoplasmic; sequence MRRSHARSRVKNSSSSKSDMDPIKFQIRSGNRAPSSSSTYTLTKPNSKHAKSNLL. Over residues 28-45 the composition is skewed to polar residues; sequence RSGNRAPSSSSTYTLTKP. A helical membrane pass occupies residues 56-76; the sequence is LTVGSISVVLGVLFLCYSILF. At 77–512 the chain is on the extracellular side; it reads SGGNLRGSLR…HALFSNHPKT (436 aa). 89–99 serves as a coordination point for ATP; that stretch reads VVIDGGSTGTR. The active-site Proton acceptor is glutamate 212. 236–246 lines the ATP pocket; that stretch reads GIVELGGASAQ. 2 N-linked (GlcNAc...) asparagine glycosylation sites follow: asparagine 267 and asparagine 348. A helical membrane pass occupies residues 513-533; the sequence is LHYLIGIPILMTVLVYLVTKW. The Cytoplasmic portion of the chain corresponds to 534–555; the sequence is RKPQLKTIYDLEKGRYIVTRIR.

This sequence belongs to the GDA1/CD39 NTPase family. Ca(2+) is required as a cofactor. In terms of tissue distribution, detected in mature pollen grains (at the protein level). Also expressed in the veins and hydathode regions of rosette leaves.

It localises to the cytoplasmic vesicle membrane. It catalyses the reaction a ribonucleoside 5'-triphosphate + 2 H2O = a ribonucleoside 5'-phosphate + 2 phosphate + 2 H(+). Catalyzes the hydrolysis of phosphoanhydride bonds of nucleoside tri- and di-phosphates. Involved in the regulation of pollen and anther development. The sequence is that of Probable apyrase 6 (APY6) from Arabidopsis thaliana (Mouse-ear cress).